A 255-amino-acid polypeptide reads, in one-letter code: Flagellar brake protein YcgR (255 aa).

A PilZ domain is found at 122–240 (QRRTYFRINT…ERDLQQVIFE (119 aa)).

It belongs to the YcgR family. Monomer. Interacts with the flagellar basal bodies.

It localises to the bacterial flagellum basal body. Acts as a flagellar brake, regulating swimming and swarming in a bis-(3'-5') cyclic diguanylic acid (c-di-GMP)-dependent manner. Binds 1 c-di-GMP dimer per subunit. Increasing levels of c-di-GMP lead to decreased motility. The protein is Flagellar brake protein YcgR of Pectobacterium carotovorum subsp. carotovorum (strain PC1).